A 278-amino-acid polypeptide reads, in one-letter code: Protoheme IX farnesyltransferase (278 aa).

Transmembrane regions (helical) follow at residues Val-12–Asp-32, Trp-33–Phe-53, Ala-83–Gly-103, Leu-105–Leu-125, Trp-130–Leu-150, Leu-157–Leu-177, Val-204–Phe-224, Leu-228–Ala-248, and Met-257–Phe-277.

The protein belongs to the UbiA prenyltransferase family. Protoheme IX farnesyltransferase subfamily.

Its subcellular location is the cell membrane. The catalysed reaction is heme b + (2E,6E)-farnesyl diphosphate + H2O = Fe(II)-heme o + diphosphate. The protein operates within porphyrin-containing compound metabolism; heme O biosynthesis; heme O from protoheme: step 1/1. Converts heme B (protoheme IX) to heme O by substitution of the vinyl group on carbon 2 of heme B porphyrin ring with a hydroxyethyl farnesyl side group. The sequence is that of Protoheme IX farnesyltransferase from Pyrobaculum islandicum (strain DSM 4184 / JCM 9189 / GEO3).